Here is a 683-residue protein sequence, read N- to C-terminus: DNA-directed RNA polymerase subunit beta' (683 aa).

Zn(2+)-binding residues include cysteine 69, cysteine 71, cysteine 87, and cysteine 90. Positions 489, 491, and 493 each coordinate Mg(2+).

Belongs to the RNA polymerase beta' chain family. RpoC1 subfamily. In terms of assembly, in plastids the minimal PEP RNA polymerase catalytic core is composed of four subunits: alpha, beta, beta', and beta''. When a (nuclear-encoded) sigma factor is associated with the core the holoenzyme is formed, which can initiate transcription. It depends on Mg(2+) as a cofactor. Zn(2+) is required as a cofactor.

The protein localises to the plastid. It localises to the chloroplast. It carries out the reaction RNA(n) + a ribonucleoside 5'-triphosphate = RNA(n+1) + diphosphate. Its function is as follows. DNA-dependent RNA polymerase catalyzes the transcription of DNA into RNA using the four ribonucleoside triphosphates as substrates. The chain is DNA-directed RNA polymerase subunit beta' from Sorghum bicolor (Sorghum).